The following is a 456-amino-acid chain: Bifunctional protein GlmU (456 aa).

Positions 1–229 are pyrophosphorylase; it reads MLNSAMSVVI…LSEVEGVNNR (229 aa). UDP-N-acetyl-alpha-D-glucosamine contacts are provided by residues 11–14, Lys25, Gln76, 81–82, 103–105, Gly140, Glu154, Asn169, and Asn227; these read LAAG, GT, and YGD. Residue Asp105 coordinates Mg(2+). Position 227 (Asn227) interacts with Mg(2+). The linker stretch occupies residues 230 to 250; sequence LQLSALERIYQREQADKLLLA. The N-acetyltransferase stretch occupies residues 251–456; sequence GVMLLDPARF…SGWQRPVKKK (206 aa). Positions 333 and 351 each coordinate UDP-N-acetyl-alpha-D-glucosamine. Catalysis depends on His363, which acts as the Proton acceptor. UDP-N-acetyl-alpha-D-glucosamine contacts are provided by Tyr366 and Asn377. Residues Ala380, 386–387, Ser405, Ala423, and Arg440 contribute to the acetyl-CoA site; that span reads NY.

In the N-terminal section; belongs to the N-acetylglucosamine-1-phosphate uridyltransferase family. The protein in the C-terminal section; belongs to the transferase hexapeptide repeat family. Homotrimer. It depends on Mg(2+) as a cofactor.

It is found in the cytoplasm. It catalyses the reaction alpha-D-glucosamine 1-phosphate + acetyl-CoA = N-acetyl-alpha-D-glucosamine 1-phosphate + CoA + H(+). The catalysed reaction is N-acetyl-alpha-D-glucosamine 1-phosphate + UTP + H(+) = UDP-N-acetyl-alpha-D-glucosamine + diphosphate. The protein operates within nucleotide-sugar biosynthesis; UDP-N-acetyl-alpha-D-glucosamine biosynthesis; N-acetyl-alpha-D-glucosamine 1-phosphate from alpha-D-glucosamine 6-phosphate (route II): step 2/2. It participates in nucleotide-sugar biosynthesis; UDP-N-acetyl-alpha-D-glucosamine biosynthesis; UDP-N-acetyl-alpha-D-glucosamine from N-acetyl-alpha-D-glucosamine 1-phosphate: step 1/1. Its pathway is bacterial outer membrane biogenesis; LPS lipid A biosynthesis. Catalyzes the last two sequential reactions in the de novo biosynthetic pathway for UDP-N-acetylglucosamine (UDP-GlcNAc). The C-terminal domain catalyzes the transfer of acetyl group from acetyl coenzyme A to glucosamine-1-phosphate (GlcN-1-P) to produce N-acetylglucosamine-1-phosphate (GlcNAc-1-P), which is converted into UDP-GlcNAc by the transfer of uridine 5-monophosphate (from uridine 5-triphosphate), a reaction catalyzed by the N-terminal domain. The sequence is that of Bifunctional protein GlmU from Pectobacterium atrosepticum (strain SCRI 1043 / ATCC BAA-672) (Erwinia carotovora subsp. atroseptica).